A 303-amino-acid polypeptide reads, in one-letter code: Cobalamin biosynthesis protein CobD (303 aa).

A run of 4 helical transmembrane segments spans residues 65 to 85 (LLAW…IVLL), 147 to 167 (DAVF…VVLY), 235 to 255 (AGPV…GAAI), and 283 to 303 (LVWA…WLYA).

Belongs to the CobD/CbiB family.

The protein resides in the cell membrane. The protein operates within cofactor biosynthesis; adenosylcobalamin biosynthesis. Its function is as follows. Converts cobyric acid to cobinamide by the addition of aminopropanol on the F carboxylic group. The polypeptide is Cobalamin biosynthesis protein CobD (Stutzerimonas stutzeri (strain A1501) (Pseudomonas stutzeri)).